The primary structure comprises 343 residues: Plasminogen (343 aa).

2 consecutive Kringle domains span residues 1–17 (APQA…DCML) and 41–120 (AQEP…GCVA). Residues 1-140 (APQAPSVENP…LRRRSREHFC (140 aa)) are plasmin heavy chain A. Cystine bridges form between Cys-15–Cys-94, Cys-36–Cys-77, and Cys-65–Cys-89. In terms of domain architecture, Peptidase S1 spans 114–341 (VVGGCVATPH…YVPWIEETMR (228 aa)). Ser-130 carries the phosphoserine modification. Cys-140 and Cys-156 form a disulfide bridge. Positions 141–343 (GGTLISPEWV…PWIEETMRRY (203 aa)) are plasmin light chain B. Catalysis depends on charge relay system residues His-155 and Asp-198. Ser-221 is subject to Phosphoserine. 3 cysteine pairs are disulfide-bonded: Cys-232-Cys-299, Cys-262-Cys-278, and Cys-289-Cys-317. The Charge relay system role is filled by Ser-293.

It belongs to the peptidase S1 family. Plasminogen subfamily. In terms of assembly, interacts with CSPG4 and AMOT. Interacts (via the Kringle domains) with HRG; the interaction tethers PLG to the cell surface and enhances its activation. Interacts (via Kringle 4 domain) with ADA; the interaction stimulates PLG activation when in complex with DPP4. Angiostatin: Interacts with ATP5F1A; the interaction inhibits most of the angiogenic effects of angiostatin.

The protein localises to the secreted. It catalyses the reaction Preferential cleavage: Lys-|-Xaa &gt; Arg-|-Xaa, higher selectivity than trypsin. Converts fibrin into soluble products.. Its activity is regulated as follows. Converted into plasmin by plasminogen activators, both plasminogen and its activator being bound to fibrin. Cannot be activated with streptokinase. Its function is as follows. Plasmin dissolves the fibrin of blood clots and acts as a proteolytic factor in a variety of other processes including embryonic development, tissue remodeling, tumor invasion, and inflammation. In ovulation, weakens the walls of the Graafian follicle. It activates the urokinase-type plasminogen activator, collagenases and several complement zymogens, such as C1, C4 and C5. Cleavage of fibronectin and laminin leads to cell detachment and apoptosis. Also cleaves fibrin, thrombospondin and von Willebrand factor. Its role in tissue remodeling and tumor invasion may be modulated by CSPG4. Binds to cells. The polypeptide is Plasminogen (PLG) (Ovis aries (Sheep)).